A 187-amino-acid polypeptide reads, in one-letter code: UPF0301 protein HS_0009 (187 aa).

The protein belongs to the UPF0301 (AlgH) family.

In Histophilus somni (strain 129Pt) (Haemophilus somnus), this protein is UPF0301 protein HS_0009.